Reading from the N-terminus, the 237-residue chain is Ribonuclease PH (237 aa).

Residues arginine 86 and 124–126 (GTR) each bind phosphate.

It belongs to the RNase PH family. As to quaternary structure, homohexameric ring arranged as a trimer of dimers.

It carries out the reaction tRNA(n+1) + phosphate = tRNA(n) + a ribonucleoside 5'-diphosphate. Phosphorolytic 3'-5' exoribonuclease that plays an important role in tRNA 3'-end maturation. Removes nucleotide residues following the 3'-CCA terminus of tRNAs; can also add nucleotides to the ends of RNA molecules by using nucleoside diphosphates as substrates, but this may not be physiologically important. Probably plays a role in initiation of 16S rRNA degradation (leading to ribosome degradation) during starvation. In Erythrobacter litoralis (strain HTCC2594), this protein is Ribonuclease PH.